We begin with the raw amino-acid sequence, 359 residues long: 1-deoxy-D-xylulose 5-phosphate reductoisomerase (359 aa).

The NADPH site is built by Thr12, Gly13, Ser14, Ile15, Lys38, and Asn39. Lys105 contacts 1-deoxy-D-xylulose 5-phosphate. Position 106 (Glu106) interacts with NADPH. Asp130 contributes to the Mn(2+) binding site. Positions 131, 132, 152, and 175 each coordinate 1-deoxy-D-xylulose 5-phosphate. Glu132 lines the Mn(2+) pocket. Residue Gly181 participates in NADPH binding. 4 residues coordinate 1-deoxy-D-xylulose 5-phosphate: Ser188, Asn193, Lys194, and Glu197. Glu197 contacts Mn(2+).

Belongs to the DXR family. It depends on Mg(2+) as a cofactor. Mn(2+) serves as cofactor.

The enzyme catalyses 2-C-methyl-D-erythritol 4-phosphate + NADP(+) = 1-deoxy-D-xylulose 5-phosphate + NADPH + H(+). It functions in the pathway isoprenoid biosynthesis; isopentenyl diphosphate biosynthesis via DXP pathway; isopentenyl diphosphate from 1-deoxy-D-xylulose 5-phosphate: step 1/6. In terms of biological role, catalyzes the NADPH-dependent rearrangement and reduction of 1-deoxy-D-xylulose-5-phosphate (DXP) to 2-C-methyl-D-erythritol 4-phosphate (MEP). This is 1-deoxy-D-xylulose 5-phosphate reductoisomerase from Pseudothermotoga lettingae (strain ATCC BAA-301 / DSM 14385 / NBRC 107922 / TMO) (Thermotoga lettingae).